We begin with the raw amino-acid sequence, 416 residues long: Serine protease inhibitor A3K (416 aa).

The first 20 residues, 1–20, serve as a signal peptide directing secretion; the sequence is MAFIAALGLLMAGICPAVLC. Asn-102, Asn-182, Asn-220, and Asn-267 each carry an N-linked (GlcNAc...) asparagine glycan. The tract at residues 365–392 is RCL; that stretch reads GTEGAAATAVTAALKSLPQTIPLLNFNR.

The protein belongs to the serpin family. Post-translationally, N-glycosylated. As to expression, liver and plasma.

Its subcellular location is the secreted. Its function is as follows. Binds to and inhibits kallikreins. Inhibits trypsin but not chymotrypsin or elastase. This chain is Serine protease inhibitor A3K (Serpina3k), found in Rattus norvegicus (Rat).